We begin with the raw amino-acid sequence, 336 residues long: N-lysine methyltransferase KMT5A (336 aa).

The segment at Met1–Cys112 is disordered. Basic and acidic residues predominate over residues Ser67–Arg93. The 122-residue stretch at Glu200–Gly321 folds into the SET domain. S-adenosyl-L-methionine contacts are provided by residues Lys210–Arg212, Tyr255, and Asn282–His283.

It belongs to the class V-like SAM-binding methyltransferase superfamily. Histone-lysine methyltransferase family. PR/SET subfamily.

The protein resides in the nucleus. Its subcellular location is the chromosome. It carries out the reaction L-lysyl(20)-[histone H4] + S-adenosyl-L-methionine = N(6)-methyl-L-lysyl(20)-[histone H4] + S-adenosyl-L-homocysteine + H(+). The enzyme catalyses L-lysyl-[protein] + S-adenosyl-L-methionine = N(6)-methyl-L-lysyl-[protein] + S-adenosyl-L-homocysteine + H(+). Protein-lysine N-methyltransferase that monomethylates both histones and non-histone proteins. Specifically monomethylates 'Lys-20' of histone H4 (H4K20me1). H4K20me1 is enriched during mitosis and represents a specific tag for epigenetic transcriptional repression. Mainly functions in euchromatin regions, thereby playing a central role in the silencing of euchromatic genes. Required for cell proliferation, probably by contributing to the maintenance of proper higher-order structure of DNA during mitosis. Involved in chromosome condensation and proper cytokinesis. Nucleosomes are preferred as substrate compared to free histones. Mediates monomethylation of p53/TP53 at 'Lys-382', leading to repress p53/TP53-target genes. Plays a negative role in TGF-beta response regulation and a positive role in cell migration. This is N-lysine methyltransferase KMT5A from Xenopus tropicalis (Western clawed frog).